Reading from the N-terminus, the 483-residue chain is Altronate oxidoreductase (483 aa).

Residue 18–29 (IIQFGEGNFLRA) coordinates NAD(+).

Belongs to the mannitol dehydrogenase family. UxaB subfamily.

The catalysed reaction is D-altronate + NAD(+) = keto-D-tagaturonate + NADH + H(+). It participates in carbohydrate metabolism; pentose and glucuronate interconversion. The polypeptide is Altronate oxidoreductase (Enterobacter sp. (strain 638)).